A 384-amino-acid chain; its full sequence is V-type proton ATPase subunit C (384 aa).

Belongs to the V-ATPase C subunit family. In terms of assembly, V-ATPase is a heteromultimeric enzyme made up of two complexes: the ATP-hydrolytic V1 complex and the proton translocation V0 complex. The V1 complex consists of three catalytic AB heterodimers that form a heterohexamer, three peripheral stalks each consisting of EG heterodimers, one central rotor including subunits D and F, and the regulatory subunits C and H. The proton translocation complex V0 consists of the proton transport subunit a, a ring of proteolipid subunits c9c'', rotary subunit d, subunits e and f, and the accessory subunits vah-19/Ac45 and vah-20/PRR. Interacts with V-type proton ATPase subunits a1 unc-32, a2 vha-5 and a3 vha-6. In terms of tissue distribution, expressed ubiquitously; higher levels are found in gastrointestinal and hypodermal cells, as well as H-shaped excretory cell.

The protein localises to the cytoplasm. It is found in the membrane. Its function is as follows. Subunit of the V1 complex of vacuolar(H+)-ATPase (V-ATPase), a multisubunit enzyme composed of a peripheral complex (V1) that hydrolyzes ATP and a membrane integral complex (V0) that translocates protons. V-ATPase is responsible for acidifying and maintaining the pH of intracellular compartments and in some cell types, is targeted to the plasma membrane, where it is responsible for acidifying the extracellular environment. Subunit C is necessary for the assembly of the catalytic sector of the enzyme and is likely to have a specific function in its catalytic activity. Has roles in embryogenesis and ovulation. The chain is V-type proton ATPase subunit C from Caenorhabditis elegans.